We begin with the raw amino-acid sequence, 316 residues long: HPr kinase/phosphorylase (316 aa).

Active-site residues include histidine 141 and lysine 162. Residue 156–163 (GESGVGKS) coordinates ATP. Mg(2+) is bound at residue serine 163. The active-site Proton acceptor; for phosphorylation activity. Proton donor; for dephosphorylation activity is the aspartate 180. The tract at residues 204 to 213 (MEIRGIGIID) is important for the catalytic mechanism of both phosphorylation and dephosphorylation. Glutamate 205 serves as a coordination point for Mg(2+). Arginine 246 is an active-site residue. The important for the catalytic mechanism of dephosphorylation stretch occupies residues 267–272 (PVKVGR).

Belongs to the HPrK/P family. As to quaternary structure, homohexamer. The cofactor is Mg(2+).

The enzyme catalyses [HPr protein]-L-serine + ATP = [HPr protein]-O-phospho-L-serine + ADP + H(+). The catalysed reaction is [HPr protein]-O-phospho-L-serine + phosphate + H(+) = [HPr protein]-L-serine + diphosphate. Catalyzes the ATP- as well as the pyrophosphate-dependent phosphorylation of a specific serine residue in HPr, a phosphocarrier protein of the phosphoenolpyruvate-dependent sugar phosphotransferase system (PTS). HprK/P also catalyzes the pyrophosphate-producing, inorganic phosphate-dependent dephosphorylation (phosphorolysis) of seryl-phosphorylated HPr (P-Ser-HPr). The two antagonistic activities of HprK/P are regulated by several intracellular metabolites, which change their concentration in response to the absence or presence of rapidly metabolisable carbon sources (glucose, fructose, etc.) in the growth medium. Therefore, by controlling the phosphorylation state of HPr, HPrK/P is a sensor enzyme that plays a major role in the regulation of carbon metabolism and sugar transport: it mediates carbon catabolite repression (CCR), and regulates PTS-catalyzed carbohydrate uptake and inducer exclusion. The sequence is that of HPr kinase/phosphorylase from Lactobacillus delbrueckii subsp. bulgaricus (strain ATCC 11842 / DSM 20081 / BCRC 10696 / JCM 1002 / NBRC 13953 / NCIMB 11778 / NCTC 12712 / WDCM 00102 / Lb 14).